Reading from the N-terminus, the 287-residue chain is Polyamine aminopropyltransferase (287 aa).

One can recognise a PABS domain in the interval 5 to 238; sequence EIWYETLHAN…GIMTFAWASN (234 aa). Position 33 (glutamine 33) interacts with S-methyl-5'-thioadenosine. Histidine 64 and aspartate 88 together coordinate spermidine. Residues glutamate 108 and 140-141 each bind S-methyl-5'-thioadenosine; that span reads DG. Aspartate 158 acts as the Proton acceptor in catalysis. 158–161 lines the spermidine pocket; sequence DCTD. Position 165 (proline 165) interacts with S-methyl-5'-thioadenosine.

The protein belongs to the spermidine/spermine synthase family. As to quaternary structure, homodimer or homotetramer.

It is found in the cytoplasm. The catalysed reaction is S-adenosyl 3-(methylsulfanyl)propylamine + putrescine = S-methyl-5'-thioadenosine + spermidine + H(+). The protein operates within amine and polyamine biosynthesis; spermidine biosynthesis; spermidine from putrescine: step 1/1. In terms of biological role, catalyzes the irreversible transfer of a propylamine group from the amino donor S-adenosylmethioninamine (decarboxy-AdoMet) to putrescine (1,4-diaminobutane) to yield spermidine. This Pectobacterium atrosepticum (strain SCRI 1043 / ATCC BAA-672) (Erwinia carotovora subsp. atroseptica) protein is Polyamine aminopropyltransferase.